The primary structure comprises 122 residues: Large ribosomal subunit protein bL12 (122 aa).

This sequence belongs to the bacterial ribosomal protein bL12 family. Homodimer. Part of the ribosomal stalk of the 50S ribosomal subunit. Forms a multimeric L10(L12)X complex, where L10 forms an elongated spine to which 2 to 4 L12 dimers bind in a sequential fashion. Binds GTP-bound translation factors.

In terms of biological role, forms part of the ribosomal stalk which helps the ribosome interact with GTP-bound translation factors. Is thus essential for accurate translation. This Shewanella putrefaciens (strain CN-32 / ATCC BAA-453) protein is Large ribosomal subunit protein bL12.